Reading from the N-terminus, the 293-residue chain is Bifunctional protein FolD (293 aa).

NADP(+)-binding positions include glycine 169 to glycine 171, threonine 196, and valine 237.

It belongs to the tetrahydrofolate dehydrogenase/cyclohydrolase family. In terms of assembly, homodimer.

It carries out the reaction (6R)-5,10-methylene-5,6,7,8-tetrahydrofolate + NADP(+) = (6R)-5,10-methenyltetrahydrofolate + NADPH. It catalyses the reaction (6R)-5,10-methenyltetrahydrofolate + H2O = (6R)-10-formyltetrahydrofolate + H(+). The protein operates within one-carbon metabolism; tetrahydrofolate interconversion. In terms of biological role, catalyzes the oxidation of 5,10-methylenetetrahydrofolate to 5,10-methenyltetrahydrofolate and then the hydrolysis of 5,10-methenyltetrahydrofolate to 10-formyltetrahydrofolate. This is Bifunctional protein FolD from Leifsonia xyli subsp. xyli (strain CTCB07).